A 240-amino-acid chain; its full sequence is Uridylate kinase (240 aa).

Residue 13-16 (KLSG) coordinates ATP. The involved in allosteric activation by GTP stretch occupies residues 21 to 26 (GEQGYG). Position 55 (glycine 55) interacts with UMP. ATP is bound by residues glycine 56 and arginine 60. Residues aspartate 75 and 137-144 (TGNPFFST) each bind UMP. Threonine 164, tyrosine 170, and aspartate 173 together coordinate ATP.

It belongs to the UMP kinase family. Homohexamer.

It localises to the cytoplasm. It carries out the reaction UMP + ATP = UDP + ADP. The protein operates within pyrimidine metabolism; CTP biosynthesis via de novo pathway; UDP from UMP (UMPK route): step 1/1. Its activity is regulated as follows. Allosterically activated by GTP. Inhibited by UTP. Catalyzes the reversible phosphorylation of UMP to UDP. This Aquifex aeolicus (strain VF5) protein is Uridylate kinase.